A 165-amino-acid chain; its full sequence is MAESFSFDVVSDFDRQELVNTLDQVKREISQRYDLKDTDTLVDLDKENIFIITNSELTLNAVNDIIRQKAIKRNLSLKIFDYGDIEIVSGNKIKQTILLKQGIKQEIAKKISKNIRDQIKKINVSINGETLRVASKSKNDLQLAIKIVSELEESLNIPLKANNFR.

The protein belongs to the YajQ family.

Nucleotide-binding protein. The protein is Nucleotide-binding protein P9301_05061 of Prochlorococcus marinus (strain MIT 9301).